Reading from the N-terminus, the 199-residue chain is Holliday junction branch migration complex subunit RuvA (199 aa).

The segment at 1-64 (MIGRLRGILL…DDAHLLYAFA (64 aa)) is domain I. Positions 65–143 (SEKERGLFRS…DMPESGVAGM (79 aa)) are domain II. The flexible linker stretch occupies residues 144–150 (RPDRVDG). Residues 151 to 199 (SAPGTVAEAVSALVALGYKPNEASRAVRRLDTEALTTEEIIRQALQRML) are domain III.

Belongs to the RuvA family. Homotetramer. Forms an RuvA(8)-RuvB(12)-Holliday junction (HJ) complex. HJ DNA is sandwiched between 2 RuvA tetramers; dsDNA enters through RuvA and exits via RuvB. An RuvB hexamer assembles on each DNA strand where it exits the tetramer. Each RuvB hexamer is contacted by two RuvA subunits (via domain III) on 2 adjacent RuvB subunits; this complex drives branch migration. In the full resolvosome a probable DNA-RuvA(4)-RuvB(12)-RuvC(2) complex forms which resolves the HJ.

It is found in the cytoplasm. In terms of biological role, the RuvA-RuvB-RuvC complex processes Holliday junction (HJ) DNA during genetic recombination and DNA repair, while the RuvA-RuvB complex plays an important role in the rescue of blocked DNA replication forks via replication fork reversal (RFR). RuvA specifically binds to HJ cruciform DNA, conferring on it an open structure. The RuvB hexamer acts as an ATP-dependent pump, pulling dsDNA into and through the RuvAB complex. HJ branch migration allows RuvC to scan DNA until it finds its consensus sequence, where it cleaves and resolves the cruciform DNA. This is Holliday junction branch migration complex subunit RuvA from Nitrosococcus oceani (strain ATCC 19707 / BCRC 17464 / JCM 30415 / NCIMB 11848 / C-107).